The primary structure comprises 312 residues: Acetyl-coenzyme A carboxylase carboxyl transferase subunit alpha (312 aa).

Residues 36-286 (RLEKEVKSIY…KEYFLDALRT (251 aa)) form the CoA carboxyltransferase C-terminal domain.

Belongs to the AccA family. As to quaternary structure, acetyl-CoA carboxylase is a heterohexamer composed of biotin carboxyl carrier protein (AccB), biotin carboxylase (AccC) and two subunits each of ACCase subunit alpha (AccA) and ACCase subunit beta (AccD).

It localises to the cytoplasm. It carries out the reaction N(6)-carboxybiotinyl-L-lysyl-[protein] + acetyl-CoA = N(6)-biotinyl-L-lysyl-[protein] + malonyl-CoA. The protein operates within lipid metabolism; malonyl-CoA biosynthesis; malonyl-CoA from acetyl-CoA: step 1/1. Its function is as follows. Component of the acetyl coenzyme A carboxylase (ACC) complex. First, biotin carboxylase catalyzes the carboxylation of biotin on its carrier protein (BCCP) and then the CO(2) group is transferred by the carboxyltransferase to acetyl-CoA to form malonyl-CoA. In Helicobacter pylori (strain P12), this protein is Acetyl-coenzyme A carboxylase carboxyl transferase subunit alpha.